Reading from the N-terminus, the 296-residue chain is Putative gluconeogenesis factor (296 aa).

It belongs to the gluconeogenesis factor family.

The protein localises to the cytoplasm. Its function is as follows. Required for morphogenesis under gluconeogenic growth conditions. The polypeptide is Putative gluconeogenesis factor (Vibrio cholerae serotype O1 (strain ATCC 39315 / El Tor Inaba N16961)).